The following is a 439-amino-acid chain: GTPase Der (439 aa).

EngA-type G domains are found at residues Ala4–Glu169 and Ile177–Asn352. GTP-binding positions include Gly10–Ser17, Asp57–Leu61, Asn120–Asp123, Gly183–Ser190, Asp230–Ile234, and Asn295–Asp298. The KH-like domain occupies Lys353–Gly437.

Belongs to the TRAFAC class TrmE-Era-EngA-EngB-Septin-like GTPase superfamily. EngA (Der) GTPase family. In terms of assembly, associates with the 50S ribosomal subunit.

Its function is as follows. GTPase that plays an essential role in the late steps of ribosome biogenesis. The chain is GTPase Der from Thermoanaerobacter pseudethanolicus (strain ATCC 33223 / 39E) (Clostridium thermohydrosulfuricum).